A 166-amino-acid chain; its full sequence is MLPFFSNTTSKSVSVSSFQGSPATPLSFLFFFFLCRAGSSMTGCFTFFLDFIFFFAGVLGPSPMGMYSGASTLTGFFLLRFLGQLSMDLEGLEWLGRASPSWWIFFSSSPSHRVPWGSCASASAPRLPVPHPPSPLSKCPQHPRPRRTKGPGLRKLWGPGPPFFPS.

N7 is a glycosylation site (N-linked (GlcNAc...) asparagine). The next 3 helical transmembrane spans lie at 15–35 (VSSF…FFLC), 41–61 (MTGC…VLGP), and 63–83 (PMGM…RFLG). A disordered region spans residues 127–166 (LPVPHPPSPLSKCPQHPRPRRTKGPGLRKLWGPGPPFFPS).

Its subcellular location is the membrane. This Homo sapiens (Human) protein is Putative transmembrane protein encoded by LINC00477 (LINC00477).